A 229-amino-acid polypeptide reads, in one-letter code: Urease accessory protein UreF (229 aa).

It belongs to the UreF family. As to quaternary structure, ureD, UreF and UreG form a complex that acts as a GTP-hydrolysis-dependent molecular chaperone, activating the urease apoprotein by helping to assemble the nickel containing metallocenter of UreC. The UreE protein probably delivers the nickel.

It is found in the cytoplasm. In terms of biological role, required for maturation of urease via the functional incorporation of the urease nickel metallocenter. This Nostoc sp. (strain PCC 7120 / SAG 25.82 / UTEX 2576) protein is Urease accessory protein UreF.